We begin with the raw amino-acid sequence, 132 residues long: Small ribosomal subunit protein uS8 (132 aa).

The protein belongs to the universal ribosomal protein uS8 family. Part of the 30S ribosomal subunit. Contacts proteins S5 and S12.

Functionally, one of the primary rRNA binding proteins, it binds directly to 16S rRNA central domain where it helps coordinate assembly of the platform of the 30S subunit. The polypeptide is Small ribosomal subunit protein uS8 (Paracoccus denitrificans (strain Pd 1222)).